The primary structure comprises 484 residues: Acetyl-coenzyme A carboxylase carboxyl transferase subunit beta, chloroplastic (484 aa).

The CoA carboxyltransferase N-terminal domain maps to 223-484 (LWIQCDNCYG…LHAFFPLNKN (262 aa)). Zn(2+)-binding residues include cysteine 227, cysteine 230, cysteine 243, and cysteine 246. Residues 227–246 (CDNCYGLMYKKVKMNVCEQC) form a C4-type zinc finger.

Belongs to the AccD/PCCB family. In terms of assembly, acetyl-CoA carboxylase is a heterohexamer composed of biotin carboxyl carrier protein, biotin carboxylase and 2 subunits each of ACCase subunit alpha and ACCase plastid-coded subunit beta (accD). It depends on Zn(2+) as a cofactor.

The protein localises to the plastid. The protein resides in the chloroplast stroma. It carries out the reaction N(6)-carboxybiotinyl-L-lysyl-[protein] + acetyl-CoA = N(6)-biotinyl-L-lysyl-[protein] + malonyl-CoA. Its pathway is lipid metabolism; malonyl-CoA biosynthesis; malonyl-CoA from acetyl-CoA: step 1/1. Its function is as follows. Component of the acetyl coenzyme A carboxylase (ACC) complex. Biotin carboxylase (BC) catalyzes the carboxylation of biotin on its carrier protein (BCCP) and then the CO(2) group is transferred by the transcarboxylase to acetyl-CoA to form malonyl-CoA. In Olimarabidopsis pumila (Dwarf rocket), this protein is Acetyl-coenzyme A carboxylase carboxyl transferase subunit beta, chloroplastic.